A 388-amino-acid polypeptide reads, in one-letter code: Chorismate synthase (388 aa).

NADP(+) is bound by residues R39 and R45. FMN contacts are provided by residues R130–S132, N251–A252, G296, K311–T315, and R337.

Belongs to the chorismate synthase family. Homotetramer. FMNH2 serves as cofactor.

The enzyme catalyses 5-O-(1-carboxyvinyl)-3-phosphoshikimate = chorismate + phosphate. The protein operates within metabolic intermediate biosynthesis; chorismate biosynthesis; chorismate from D-erythrose 4-phosphate and phosphoenolpyruvate: step 7/7. In terms of biological role, catalyzes the anti-1,4-elimination of the C-3 phosphate and the C-6 proR hydrogen from 5-enolpyruvylshikimate-3-phosphate (EPSP) to yield chorismate, which is the branch point compound that serves as the starting substrate for the three terminal pathways of aromatic amino acid biosynthesis. This reaction introduces a second double bond into the aromatic ring system. The sequence is that of Chorismate synthase from Streptococcus pneumoniae serotype 2 (strain D39 / NCTC 7466).